We begin with the raw amino-acid sequence, 567 residues long: Geranylgeranyl transferase type-2 subunit alpha (567 aa).

PFTA repeat units lie at residues 44-78, 88-122, 124-158, 159-193, 207-241, and 363-397; these read LDES…QLET, LVKA…RLPE, NWTR…QAAV, PPAE…QLHP, VLLK…RADP, and VLQS…ALDP. S98 is subject to Phosphoserine. LRR repeat units follow at residues 442–463, 464–486, 487–508, 509–530, and 534–555; these read EVRV…EQLL, LVTH…AALR, CLEV…TNLP, RLQE…QPLA, and RLVL…LEQL.

The protein belongs to the protein prenyltransferase subunit alpha family. In terms of assembly, heterotrimer composed of RABGGTA, RABGGTB and CHM; within this trimer, RABGGTA and RABGGTB form the catalytic component B, while CHM (component A) mediates peptide substrate binding. The Rab GGTase dimer (RGGT) interacts with CHM (component A) prior to Rab protein binding; the association is stabilized by geranylgeranyl pyrophosphate (GGpp). The CHM:RGGT:Rab complex is destabilized by GGpp. Interacts with non-phosphorylated form of RAB8A; phosphorylation of RAB8A at 'Thr-72' disrupts this interaction.

The catalysed reaction is geranylgeranyl diphosphate + L-cysteinyl-[protein] = S-geranylgeranyl-L-cysteinyl-[protein] + diphosphate. With respect to regulation, the enzymatic reaction requires the aid of a Rab escort protein (also called component A), such as CHM. Functionally, catalyzes the transfer of a geranylgeranyl moiety from geranylgeranyl diphosphate to both cysteines of Rab proteins with the C-terminal sequence -XXCC, -XCXC and -CCXX, such as RAB1A, RAB3A, RAB5A and RAB7A. The polypeptide is Geranylgeranyl transferase type-2 subunit alpha (RABGGTA) (Homo sapiens (Human)).